Here is a 514-residue protein sequence, read N- to C-terminus: Probable cytosol aminopeptidase (514 aa).

Mn(2+) is bound by residues Lys-266 and Asp-271. Lys-278 is a catalytic residue. Mn(2+)-binding residues include Asp-289, Asp-357, and Glu-359. Arg-361 is a catalytic residue.

This sequence belongs to the peptidase M17 family. Mn(2+) serves as cofactor.

The protein resides in the cytoplasm. The enzyme catalyses Release of an N-terminal amino acid, Xaa-|-Yaa-, in which Xaa is preferably Leu, but may be other amino acids including Pro although not Arg or Lys, and Yaa may be Pro. Amino acid amides and methyl esters are also readily hydrolyzed, but rates on arylamides are exceedingly low.. It catalyses the reaction Release of an N-terminal amino acid, preferentially leucine, but not glutamic or aspartic acids.. Its function is as follows. Presumably involved in the processing and regular turnover of intracellular proteins. Catalyzes the removal of unsubstituted N-terminal amino acids from various peptides. The polypeptide is Probable cytosol aminopeptidase (Oleidesulfovibrio alaskensis (strain ATCC BAA-1058 / DSM 17464 / G20) (Desulfovibrio alaskensis)).